The chain runs to 106 residues: Small ribosomal subunit protein uS10 (106 aa).

The protein belongs to the universal ribosomal protein uS10 family. Part of the 30S ribosomal subunit.

In terms of biological role, involved in the binding of tRNA to the ribosomes. The protein is Small ribosomal subunit protein uS10 of Prochlorococcus marinus subsp. pastoris (strain CCMP1986 / NIES-2087 / MED4).